The following is a 101-amino-acid chain: Small ribosomal subunit protein uS14 (101 aa).

Belongs to the universal ribosomal protein uS14 family. In terms of assembly, part of the 30S ribosomal subunit. Contacts proteins S3 and S10.

Its function is as follows. Binds 16S rRNA, required for the assembly of 30S particles and may also be responsible for determining the conformation of the 16S rRNA at the A site. This chain is Small ribosomal subunit protein uS14, found in Chlamydia abortus (strain DSM 27085 / S26/3) (Chlamydophila abortus).